The following is a 101-amino-acid chain: Small ribosomal subunit protein uS10 (101 aa).

Belongs to the universal ribosomal protein uS10 family. In terms of assembly, part of the 30S ribosomal subunit.

In terms of biological role, involved in the binding of tRNA to the ribosomes. This is Small ribosomal subunit protein uS10 from Methanocaldococcus jannaschii (strain ATCC 43067 / DSM 2661 / JAL-1 / JCM 10045 / NBRC 100440) (Methanococcus jannaschii).